Consider the following 92-residue polypeptide: Small ribosomal subunit protein uS19 (92 aa).

This sequence belongs to the universal ribosomal protein uS19 family.

In terms of biological role, protein S19 forms a complex with S13 that binds strongly to the 16S ribosomal RNA. This chain is Small ribosomal subunit protein uS19, found in Orientia tsutsugamushi (strain Boryong) (Rickettsia tsutsugamushi).